The following is a 301-amino-acid chain: Mas-related G-protein coupled receptor member A6 (301 aa).

Residues 1-15 (MHRSISIRILITNLM) lie on the Extracellular side of the membrane. The helical transmembrane segment at 16–36 (IVILGLVGLTGNAIVFWLLLF) threads the bilayer. Topologically, residues 37 to 42 (RLRRNA) are cytoplasmic. The helical transmembrane segment at 43-63 (FSIYILNLALADFLFLLCHII) threads the bilayer. Residues 64–77 (ASTEHILTFSSPNS) lie on the Extracellular side of the membrane. A helical membrane pass occupies residues 78 to 98 (IFINCLYTFRVLLYIAGLNML). Over 99 to 128 (SAISIERCLSVMCPIWYRCHRPEHTSTVMC) the chain is Cytoplasmic. Residues 129-149 (AMIWVLSLLLCILYRYFCGFL) traverse the membrane as a helical segment. Residues 150-163 (DTKYEDDYGCLAMN) are Extracellular-facing. Residues 164–184 (FLTTAYLMFLFVVLCVSSLAL) traverse the membrane as a helical segment. Over 185–203 (LARLFCGAGRMKLTRLYVT) the chain is Cytoplasmic. The chain crosses the membrane as a helical span at residues 204–224 (ITLTLLVFLLCGLPCGFYWFL). Over 225–240 (LSKIKNVFSVFEFSLY) the chain is Extracellular. The helical transmembrane segment at 241 to 261 (LTSVVLTAINSCANPIIYFFV) threads the bilayer. The Cytoplasmic portion of the chain corresponds to 262–301 (GSFRHRLKHQTLKMVLQSALQDTPETPENMVEMSRNKAEL).

It belongs to the G-protein coupled receptor 1 family. Mas subfamily. Expressed in a subset of sensory neurons that includes nociceptors. Expressed in the subclass of non-peptidergic sensory neurons that are IB4(+) and VR1(-).

The protein localises to the cell membrane. Its function is as follows. Orphan receptor. May be a receptor for RFamide-family neuropeptides such as NPFF and NPAF, which are analgesic in vivo. May regulate nociceptor function and/or development, including the sensation or modulation of pain. This chain is Mas-related G-protein coupled receptor member A6 (Mrgpra6), found in Mus musculus (Mouse).